A 405-amino-acid polypeptide reads, in one-letter code: Glucoside xylosyltransferase 1 (405 aa).

Over 1-2 (MR) the chain is Cytoplasmic. A helical; Signal-anchor for type II membrane protein membrane pass occupies residues 3-23 (IYLRTFGLCIVVALLSLVFLF). Over 24–405 (SKHDEGSFSA…RLQRATPPGD (382 aa)) the chain is Lumenal. The disordered stretch occupies residues 46–65 (SFNGAKAKQRPTATTSHRDV). N-linked (GlcNAc...) asparagine glycosylation is found at Asn-202, Asn-243, Asn-277, and Asn-372.

Belongs to the glycosyltransferase 8 family.

It localises to the membrane. It catalyses the reaction 3-O-(beta-D-glucosyl)-L-seryl-[EGF-like domain protein] + UDP-alpha-D-xylose = 3-O-[alpha-D-xylosyl-(1-&gt;3)-beta-D-glucosyl]-L-seryl-[EGF-like domain protein] + UDP + H(+). In terms of biological role, glycosyltransferase which elongates the O-linked glucose attached to EGF-like repeats in the extracellular domain of Notch proteins by catalyzing the addition of xylose. In Danio rerio (Zebrafish), this protein is Glucoside xylosyltransferase 1 (gxylt1).